A 266-amino-acid polypeptide reads, in one-letter code: Coiled-coil domain-containing glutamate-rich protein 2 (266 aa).

Positions 1–23 (MPPRGPASELLLLRLLLLGAATA) are cleaved as a signal peptide. Composition is skewed to basic and acidic residues over residues 90–100 (EAGKMRSSQEV), 154–188 (LWQR…EKGV), 204–213 (GGGERREDLP), and 221–266 (QPEA…RREG). The interval 90–266 (EAGKMRSSQE…TLGEQLRREG (177 aa)) is disordered.

In terms of tissue distribution, expressed at higher levels in fetal brain and skeletal muscle. Lower expression is detected in fetal kidney, liver, spleen, thymus, heart and lung.

Its subcellular location is the secreted. The protein is Coiled-coil domain-containing glutamate-rich protein 2 (CCER2) of Homo sapiens (Human).